The primary structure comprises 559 residues: MSMLKDPSSKYRAFPTIDIPDRTWPSKTITEAPIWCSSDLRDGNQSLIEPMDAVKKLRFWKTLVAVGVKEIEASFPAASQTDFDFVRTLIEDNHIPEDTTIQVLTQGREDLIARTFESLRGAKKAIVHLYNATSPSFRRIVFNQDKEGIKAIAVNAAKLFVKYAAQQPETQWTFEYSPETFSATELEFAKEVCDAVIEVWNPTPEHKMILNLPATVECATPNIYADQIEWFGRHINRRDSVIISLHTHNDRGTGVAATELGLMAGADRVEGCLFGNGERTGNVDLVTVALNMYTQGLDPQLDFSDIDGVRKVVEECNQIQVHPRHPYVGDLVHTAFSGSHQDAIRKGFTQQKDDALWEVPYLPIDPADIGRSYEAVIRVNSQSGKGGIAYLLEQEYDISLPRRMQIEFSQVVQAETDRVGLEMTAPQIYALLQREYLQANTPYALVSHRLQEENGNSFVEVEVSGKGQGETNLHWKGKGNGALEALVAGLPIGVEIMDYNEHAIGAGTNAKAAAYIELRVNGERPVHGVGIDENITTASFKALFSALNRSLSQQEAKAA.

The Pyruvate carboxyltransferase domain occupies 33 to 307 (PIWCSSDLRD…DPQLDFSDID (275 aa)). 4 residues coordinate Mg(2+): Asp-42, His-246, His-248, and Asn-282. Residues 439–559 (ANTPYALVSH…SLSQQEAKAA (121 aa)) are regulatory domain.

Belongs to the alpha-IPM synthase/homocitrate synthase family. LeuA type 2 subfamily. In terms of assembly, homodimer. It depends on Mg(2+) as a cofactor.

The protein localises to the cytoplasm. It carries out the reaction 3-methyl-2-oxobutanoate + acetyl-CoA + H2O = (2S)-2-isopropylmalate + CoA + H(+). The protein operates within amino-acid biosynthesis; L-leucine biosynthesis; L-leucine from 3-methyl-2-oxobutanoate: step 1/4. Functionally, catalyzes the condensation of the acetyl group of acetyl-CoA with 3-methyl-2-oxobutanoate (2-ketoisovalerate) to form 3-carboxy-3-hydroxy-4-methylpentanoate (2-isopropylmalate). The polypeptide is 2-isopropylmalate synthase (Pseudomonas fluorescens (strain SBW25)).